We begin with the raw amino-acid sequence, 197 residues long: Nucleoside triphosphate pyrophosphatase (197 aa).

Asp72 serves as the catalytic Proton acceptor.

Belongs to the Maf family. The cofactor is a divalent metal cation.

The protein resides in the cytoplasm. It catalyses the reaction a ribonucleoside 5'-triphosphate + H2O = a ribonucleoside 5'-phosphate + diphosphate + H(+). The catalysed reaction is a 2'-deoxyribonucleoside 5'-triphosphate + H2O = a 2'-deoxyribonucleoside 5'-phosphate + diphosphate + H(+). Nucleoside triphosphate pyrophosphatase. May have a dual role in cell division arrest and in preventing the incorporation of modified nucleotides into cellular nucleic acids. This is Nucleoside triphosphate pyrophosphatase from Corynebacterium efficiens (strain DSM 44549 / YS-314 / AJ 12310 / JCM 11189 / NBRC 100395).